The sequence spans 102 residues: 10 kDa heat shock protein, mitochondrial (102 aa).

Belongs to the GroES chaperonin family. In terms of assembly, homohexamer.

It is found in the mitochondrion matrix. Its function is as follows. Eukaryotic CPN10 homolog which is essential for mitochondrial protein biogenesis, together with CPN60. Binds to CPN60 in the presence of Mg-ATP and suppresses the ATPase activity of the latter. This Schistosoma japonicum (Blood fluke) protein is 10 kDa heat shock protein, mitochondrial.